A 360-amino-acid polypeptide reads, in one-letter code: Tyrosine-protein phosphatase non-receptor type 7 (360 aa).

Positions 1 to 37 are disordered; that stretch reads MVQAHGGRSRAQPLTLSLGAAMTQPPPEKTPAKKHVR. The interaction with MAP kinases stretch occupies residues 38–51; sequence LQERRGSNVALMLD. The residue at position 44 (Ser-44) is a Phosphoserine. Position 66 is a phosphothreonine (Thr-66). Phosphoserine is present on residues Ser-93, Ser-110, and Ser-143. The Tyrosine-protein phosphatase domain occupies 97-350; sequence LEEEFLKIPS…QFLHHTLALY (254 aa). Substrate is bound by residues Asp-257, 291–297, and Gln-335; that span reads CSAGIGR. Cys-291 acts as the Phosphocysteine intermediate in catalysis. Cys-291 bears the Cysteine sulfenic acid (-SOH) mark.

The protein belongs to the protein-tyrosine phosphatase family. Non-receptor class subfamily. In terms of assembly, monomer. Interacts with MAPK1, MAPK3 and several other MAP kinases. In terms of processing, phosphorylated on serine residues in resting T-cells. Phosphorylation increases upon exposure to stimuli that increase intracellular cAMP levels. Phosphorylation leads to dissociation of bound MAP kinases. Post-translationally, oxidized at active site cysteine. Treatment with pervanadate (vanadate and H(2)O(2)) or with antigen enhanced oxidation of active site cysteine. As to expression, expressed exclusively in thymus and spleen.

Its subcellular location is the cytoplasm. The protein localises to the cytoskeleton. It catalyses the reaction O-phospho-L-tyrosyl-[protein] + H2O = L-tyrosyl-[protein] + phosphate. With respect to regulation, inhibited in cells after FCER1A triggering. Its function is as follows. Protein phosphatase that acts preferentially on tyrosine-phosphorylated MAPK1. Plays a role in the regulation of T and B-lymphocyte development and signal transduction. The chain is Tyrosine-protein phosphatase non-receptor type 7 (PTPN7) from Homo sapiens (Human).